Here is a 509-residue protein sequence, read N- to C-terminus: Maturase K (509 aa).

This sequence belongs to the intron maturase 2 family. MatK subfamily.

The protein resides in the plastid. It localises to the chloroplast. Functionally, usually encoded in the trnK tRNA gene intron. Probably assists in splicing its own and other chloroplast group II introns. The chain is Maturase K from Solanum bulbocastanum (Wild potato).